A 152-amino-acid polypeptide reads, in one-letter code: Deoxyuridine 5'-triphosphate nucleotidohydrolase (152 aa).

Substrate-binding positions include 71–73 (RSG), Asn84, 88–90 (LID), and Met98.

This sequence belongs to the dUTPase family. Requires Mg(2+) as cofactor.

The catalysed reaction is dUTP + H2O = dUMP + diphosphate + H(+). It functions in the pathway pyrimidine metabolism; dUMP biosynthesis; dUMP from dCTP (dUTP route): step 2/2. Its function is as follows. This enzyme is involved in nucleotide metabolism: it produces dUMP, the immediate precursor of thymidine nucleotides and it decreases the intracellular concentration of dUTP so that uracil cannot be incorporated into DNA. This is Deoxyuridine 5'-triphosphate nucleotidohydrolase from Salmonella agona (strain SL483).